The following is a 200-amino-acid chain: NADH-quinone oxidoreductase subunit C (200 aa).

This sequence belongs to the complex I 30 kDa subunit family. NDH-1 is composed of 14 different subunits. Subunits NuoB, C, D, E, F, and G constitute the peripheral sector of the complex.

The protein resides in the cell inner membrane. It carries out the reaction a quinone + NADH + 5 H(+)(in) = a quinol + NAD(+) + 4 H(+)(out). Its function is as follows. NDH-1 shuttles electrons from NADH, via FMN and iron-sulfur (Fe-S) centers, to quinones in the respiratory chain. The immediate electron acceptor for the enzyme in this species is believed to be ubiquinone. Couples the redox reaction to proton translocation (for every two electrons transferred, four hydrogen ions are translocated across the cytoplasmic membrane), and thus conserves the redox energy in a proton gradient. The chain is NADH-quinone oxidoreductase subunit C from Burkholderia cenocepacia (strain HI2424).